Reading from the N-terminus, the 461-residue chain is Bacterial E1-like protein BilD (461 aa).

Cys385 acts as the Glycyl thioester intermediate in catalysis.

Functionally, component of the Bil (bacterial ISG15-like) antiviral defense system, composed of BilA, BilB, BilC and BilD. The Bil system specifically conjugates a ubiquitin-like moiety (bilA) to the bacteriophage central tail fiber (CTF, or tip attachment protein J) via reactions involving E1 (bilD) and E2 (bilB). Modifies CTF of phage SECphi27 and SECphi4, which probably interferes with assembly of the phage tail. Also modifies T5 baseplate hub protein pb3 (gene D16), but not gp27 of phage T6 (Bil defends against T6). BilD (E1) catalyzes the first step in conjugation. Activates ubiquitin-like BilA by first adenylating its C-terminal glycine residue with ATP, and then conjugates it to the side chain of a cysteine residue in E1 (this protein), yielding a ubiquitin-E1 thioester and free AMP. Bil-encoding bacteria produce mostly defective phage SECphi27, many of which have phage assembly defects, including no tails. SECphi27 phage progeny produced in E.coli with the Bil system inject less DNA into naive host cells, maybe because the phage are less able to adsorb and inject their DNA into host cells. In terms of biological role, expression of the Bil system in E.coli (strain MG1655) confers about 100-fold resistance to phage SECphi27, SECphi18, SECphi6, SECphi4 and T5, but not to SECphi17. When cells expressing the Bil system are infected by phage SECphi27 at low multiplicity of infection (0.03 MOI) the culture survives, at 3.0 MOI the culture collapses at the same time as cells without the Bil system. The polypeptide is Bacterial E1-like protein BilD (Collimonas sp. (strain OK412)).